We begin with the raw amino-acid sequence, 317 residues long: Apolipoprotein E (317 aa).

The signal sequence occupies residues 1–18 (MKVLWAALLVTFLAGCQA). 8 repeat units span residues 80–101 (ALMD…EQLT), 102–123 (PVAE…ARLG), 124–145 (ADME…AMLG), 146–167 (QSTE…KRLL), 168–189 (RDAD…EGAE), 190–211 (RGVS…VRAA), 212–233 (TVGS…ERLR), and 234–255 (ARME…EQVA). An 8 X 22 AA approximate tandem repeats region spans residues 80–255 (ALMDETMKEL…RLDEVKEQVA (176 aa)). Residue Met143 is modified to Methionine sulfoxide. Ser147 bears the Phosphoserine mark. The tract at residues 158-168 (HLRKLRKRLLR) is LDL and other lipoprotein receptors binding. Residue 162–165 (LRKR) coordinates heparin. Residues 210–290 (AATVGSLAGQ…SWFEPLVEDM (81 aa)) are lipid-binding and lipoprotein association. 229–236 (GERLRARM) is a heparin binding site. The tract at residues 266-317 (QQIRLQAEAFQARLKSWFEPLVEDMQRQWAGLVEKVQAAVGTSAAPVPSDNH) is homooligomerization. A specificity for association with VLDL region spans residues 278 to 290 (RLKSWFEPLVEDM).

This sequence belongs to the apolipoprotein A1/A4/E family. As to quaternary structure, homotetramer. May interact with ABCA1; functionally associated with ABCA1 in the biogenesis of HDLs. May interact with APP/A4 amyloid-beta peptide; the interaction is extremely stable in vitro but its physiological significance is unclear. May interact with MAPT. May interact with MAP2. In the cerebrospinal fluid, interacts with secreted SORL1. Interacts with PMEL; this allows the loading of PMEL luminal fragment on ILVs to induce fibril nucleation. APOE exists as multiple glycosylated and sialylated glycoforms within cells and in plasma. The extent of glycosylation and sialylation are tissue and context specific. In terms of processing, glycated in plasma VLDL. Post-translationally, phosphorylated by FAM20C in the extracellular medium.

It localises to the secreted. Its subcellular location is the extracellular space. It is found in the extracellular matrix. The protein resides in the extracellular vesicle. The protein localises to the endosome. It localises to the multivesicular body. In terms of biological role, APOE is an apolipoprotein, a protein associating with lipid particles, that mainly functions in lipoprotein-mediated lipid transport between organs via the plasma and interstitial fluids. APOE is a core component of plasma lipoproteins and is involved in their production, conversion and clearance. Apolipoproteins are amphipathic molecules that interact both with lipids of the lipoprotein particle core and the aqueous environment of the plasma. As such, APOE associates with chylomicrons, chylomicron remnants, very low density lipoproteins (VLDL) and intermediate density lipoproteins (IDL) but shows a preferential binding to high-density lipoproteins (HDL). It also binds a wide range of cellular receptors including the LDL receptor/LDLR, the LDL receptor-related proteins LRP1, LRP2 and LRP8 and the very low-density lipoprotein receptor/VLDLR that mediate the cellular uptake of the APOE-containing lipoprotein particles. Finally, APOE also has a heparin-binding activity and binds heparan-sulfate proteoglycans on the surface of cells, a property that supports the capture and the receptor-mediated uptake of APOE-containing lipoproteins by cells. A main function of APOE is to mediate lipoprotein clearance through the uptake of chylomicrons, VLDLs, and HDLs by hepatocytes. APOE is also involved in the biosynthesis by the liver of VLDLs as well as their uptake by peripheral tissues ensuring the delivery of triglycerides and energy storage in muscle, heart and adipose tissues. By participating in the lipoprotein-mediated distribution of lipids among tissues, APOE plays a critical role in plasma and tissues lipid homeostasis. APOE is also involved in two steps of reverse cholesterol transport, the HDLs-mediated transport of cholesterol from peripheral tissues to the liver, and thereby plays an important role in cholesterol homeostasis. First, it is functionally associated with ABCA1 in the biogenesis of HDLs in tissues. Second, it is enriched in circulating HDLs and mediates their uptake by hepatocytes. APOE also plays an important role in lipid transport in the central nervous system, regulating neuron survival and sprouting. The polypeptide is Apolipoprotein E (APOE) (Hylobates lar (Lar gibbon)).